Reading from the N-terminus, the 1193-residue chain is Structural maintenance of chromosomes protein 3 homolog (1193 aa).

An ATP-binding site is contributed by 31–38 (GFNGSGKS). N6-acetyllysine is present on lysine 101. Coiled coils occupy residues 179-286 (SKKV…LNKT) and 332-483 (ILRV…EIIK). The 127-residue stretch at 505-631 (ENILGFLIDN…VKSLESCENY (127 aa)) folds into the SMC hinge domain. A coiled-coil region spans residues 665–993 (TVYNKLKELK…SHKNIKDMIQ (329 aa)).

Belongs to the SMC family. SMC3 subfamily. Component of the cohesin complex. Acetylation at Lys-101 by ESCO1 is important for genome stability and S phase sister chromatid cohesion.

Its subcellular location is the nucleus. Functionally, central component of cohesin, a complex required for chromosome cohesion during the cell cycle. The cohesin complex may form a large proteinaceous ring within which sister chromatids can be trapped. At anaphase, the complex is cleaved and dissociates from chromatin, allowing sister chromatids to segregate. Cohesion is coupled to DNA replication and is involved in DNA repair. The cohesin complex also plays an important role in spindle pole assembly during mitosis and in chromosomes movement. The chain is Structural maintenance of chromosomes protein 3 homolog from Plasmodium falciparum (isolate 3D7).